The chain runs to 402 residues: Ketol-acid reductoisomerase, mitochondrial (402 aa).

The transit peptide at 1 to 26 (MAARNCTKALRPLARQLATPAVQRRT) directs the protein to the mitochondrion. Residues 63 to 252 (KEEVHERADW…AVGSGYLYET (190 aa)) enclose the KARI N-terminal Rossmann domain. Residues 90 to 99 (GYGSQGHGQG), 114 to 119 (RKNGKS), and 152 to 156 (SDAAQ) each bind NADP(+). Histidine 177 is an active-site residue. A KARI C-terminal knotted domain is found at 253–400 (TFEKEVYSDL…KAVRSLRPEN (148 aa)). The Mg(2+) site is built by aspartate 261, glutamate 265, glutamate 297, and glutamate 301. Serine 323 serves as a coordination point for substrate.

It belongs to the ketol-acid reductoisomerase family. Mg(2+) is required as a cofactor.

It is found in the mitochondrion. The enzyme catalyses (2R)-2,3-dihydroxy-3-methylbutanoate + NADP(+) = (2S)-2-acetolactate + NADPH + H(+). It catalyses the reaction (2R,3R)-2,3-dihydroxy-3-methylpentanoate + NADP(+) = (S)-2-ethyl-2-hydroxy-3-oxobutanoate + NADPH + H(+). Its pathway is amino-acid biosynthesis; L-isoleucine biosynthesis; L-isoleucine from 2-oxobutanoate: step 2/4. It participates in amino-acid biosynthesis; L-valine biosynthesis; L-valine from pyruvate: step 2/4. The protein is Ketol-acid reductoisomerase, mitochondrial (ilv-2) of Neurospora crassa (strain ATCC 24698 / 74-OR23-1A / CBS 708.71 / DSM 1257 / FGSC 987).